Here is a 495-residue protein sequence, read N- to C-terminus: UDP-N-acetylmuramoyl-L-alanyl-D-glutamate--2,6-diaminopimelate ligase (495 aa).

Ser29 lines the UDP-N-acetyl-alpha-D-muramoyl-L-alanyl-D-glutamate pocket. Position 111–117 (111–117 (GTNGKTS)) interacts with ATP. Residues 153–154 (TT), Ser180, Gln186, and Arg188 each bind UDP-N-acetyl-alpha-D-muramoyl-L-alanyl-D-glutamate. Lys220 is modified (N6-carboxylysine). Residues Arg384, 408 to 411 (DNPR), Gly459, and Glu463 each bind meso-2,6-diaminopimelate. Positions 408–411 (DNPR) match the Meso-diaminopimelate recognition motif motif.

It belongs to the MurCDEF family. MurE subfamily. The cofactor is Mg(2+). Carboxylation is probably crucial for Mg(2+) binding and, consequently, for the gamma-phosphate positioning of ATP.

The protein localises to the cytoplasm. The catalysed reaction is UDP-N-acetyl-alpha-D-muramoyl-L-alanyl-D-glutamate + meso-2,6-diaminopimelate + ATP = UDP-N-acetyl-alpha-D-muramoyl-L-alanyl-gamma-D-glutamyl-meso-2,6-diaminopimelate + ADP + phosphate + H(+). Its pathway is cell wall biogenesis; peptidoglycan biosynthesis. In terms of biological role, catalyzes the addition of meso-diaminopimelic acid to the nucleotide precursor UDP-N-acetylmuramoyl-L-alanyl-D-glutamate (UMAG) in the biosynthesis of bacterial cell-wall peptidoglycan. The protein is UDP-N-acetylmuramoyl-L-alanyl-D-glutamate--2,6-diaminopimelate ligase of Xylella fastidiosa (strain Temecula1 / ATCC 700964).